A 215-amino-acid polypeptide reads, in one-letter code: Large ribosomal subunit protein uL4 (215 aa).

The disordered stretch occupies residues 51-88 (KGMGEVSGTTKKPYRQKGTGNARQGSLRAPQFRTGGAV).

This sequence belongs to the universal ribosomal protein uL4 family. In terms of assembly, part of the 50S ribosomal subunit.

In terms of biological role, one of the primary rRNA binding proteins, this protein initially binds near the 5'-end of the 23S rRNA. It is important during the early stages of 50S assembly. It makes multiple contacts with different domains of the 23S rRNA in the assembled 50S subunit and ribosome. Functionally, forms part of the polypeptide exit tunnel. The sequence is that of Large ribosomal subunit protein uL4 from Granulibacter bethesdensis (strain ATCC BAA-1260 / CGDNIH1).